A 951-amino-acid polypeptide reads, in one-letter code: Glycine dehydrogenase (decarboxylating) (951 aa).

K709 is subject to N6-(pyridoxal phosphate)lysine.

Belongs to the GcvP family. In terms of assembly, the glycine cleavage system is composed of four proteins: P, T, L and H. Requires pyridoxal 5'-phosphate as cofactor.

It catalyses the reaction N(6)-[(R)-lipoyl]-L-lysyl-[glycine-cleavage complex H protein] + glycine + H(+) = N(6)-[(R)-S(8)-aminomethyldihydrolipoyl]-L-lysyl-[glycine-cleavage complex H protein] + CO2. Its function is as follows. The glycine cleavage system catalyzes the degradation of glycine. The P protein binds the alpha-amino group of glycine through its pyridoxal phosphate cofactor; CO(2) is released and the remaining methylamine moiety is then transferred to the lipoamide cofactor of the H protein. This chain is Glycine dehydrogenase (decarboxylating), found in Gluconobacter oxydans (strain 621H) (Gluconobacter suboxydans).